A 118-amino-acid chain; its full sequence is Turripeptide NCR-01 (118 aa).

An N-terminal signal peptide occupies residues M1–A16. The tract at residues Q63–Y118 is disordered. Residues Q85 to D102 are compositionally biased toward polar residues.

Expressed by the venom duct.

The protein resides in the secreted. This chain is Turripeptide NCR-01, found in Gemmula speciosa (Splendid gem-turris).